The chain runs to 624 residues: MQTHSSSLVFLALLCLSWALLVSPTRPPSQPPSHPPIQPSSQPPTQPPSQPPTQPPTQPPSHPPTQPPTPPPSQSPSQPSPLPPNIACKSTPYPKLCRTILSAVKSSPSDPYHYGKFTMKQCLKQARRLSKVINRFAQRVEADPGTSTVEEVSAVADCGELAELSVEYLETVTEELKAAELMTAALVDRVTSLLGGVVTNQQTCLDGLVDAKSGFATAIGTPLGNLTRLYSVSLGLVSHALNRNLKRYKGSKGKIFGGGNKPVREPLETLIKVLRKTCDKGKDCRKANRNLGELGETSGGSILVREAVTVGPYETDNFPTITEAVAAAPNHTFPEQGYFVIYARAGLYEEYVVISNKKRNIMLIGDGINKTIISGNHSFIDGWTTYNSSTFAVVGDRFVAVDVTFRNTAGPEKHQAVAVRNNADGSTFYRCSFEGYQDTLYVHSLRQFYRECDIYGTIDFIFGNAAAIFQNCNIYARKPMANQKNAVTAHGRTDPNQKTGISIINCTIGAAPDLAADPKSTMTFLGRPWKPYSRTVYIQSYISDVVQPVGWLEWNGTTGLDTISYGEYDNFGPGADTSKRVQWSGYSLLNLVQAMNFTVYNFTLGDTWLPQTDIPFYGGLLHTE.

The N-terminal stretch at 1-19 (MQTHSSSLVFLALLCLSWA) is a signal peptide. A disordered region spans residues 24-88 (PTRPPSQPPS…PSPLPPNIAC (65 aa)). Pro residues predominate over residues 25–84 (TRPPSQPPSHPPIQPSSQPPTQPPSQPPTQPPTQPPSHPPTQPPTPPPSQSPSQPSPLPP). The interval 74–236 (QSPSQPSPLP…TRLYSVSLGL (163 aa)) is pectinesterase inhibitor 47. N-linked (GlcNAc...) asparagine glycosylation is found at Asn225, Asn330, Asn369, and Asn376. Residues 307–606 (AVTVGPYETD…FTVYNFTLGD (300 aa)) are pectinesterase 47. A substrate-binding site is contributed by Thr385. N-linked (GlcNAc...) asparagine glycosylation is present at Asn387. Substrate is bound at residue Gln415. Catalysis depends on Asp438, which acts as the Proton donor; for pectinesterase activity. Cys452 and Cys472 are oxidised to a cystine. The active-site Nucleophile; for pectinesterase activity is Asp459. An N-linked (GlcNAc...) asparagine glycan is attached at Asn505. Positions 527 and 529 each coordinate substrate. N-linked (GlcNAc...) asparagine glycans are attached at residues Asn555, Asn596, and Asn601.

This sequence in the N-terminal section; belongs to the PMEI family. In the C-terminal section; belongs to the pectinesterase family.

Its subcellular location is the secreted. It is found in the cell wall. It carries out the reaction [(1-&gt;4)-alpha-D-galacturonosyl methyl ester](n) + n H2O = [(1-&gt;4)-alpha-D-galacturonosyl](n) + n methanol + n H(+). The protein operates within glycan metabolism; pectin degradation; 2-dehydro-3-deoxy-D-gluconate from pectin: step 1/5. Acts in the modification of cell walls via demethylesterification of cell wall pectin. In Arabidopsis thaliana (Mouse-ear cress), this protein is Probable pectinesterase/pectinesterase inhibitor 47 (PME47).